A 99-amino-acid chain; its full sequence is NADH-quinone oxidoreductase subunit K (99 aa).

The next 3 helical transmembrane spans lie at 3-23, 28-48, and 59-79; these read PANY…GVLL, IVMF…FVTF, and MIAF…LAII.

It belongs to the complex I subunit 4L family. In terms of assembly, NDH-1 is composed of 14 different subunits. Subunits NuoA, H, J, K, L, M, N constitute the membrane sector of the complex.

The protein resides in the cell membrane. The catalysed reaction is a quinone + NADH + 5 H(+)(in) = a quinol + NAD(+) + 4 H(+)(out). Its function is as follows. NDH-1 shuttles electrons from NADH, via FMN and iron-sulfur (Fe-S) centers, to quinones in the respiratory chain. The immediate electron acceptor for the enzyme in this species is believed to be a menaquinone. Couples the redox reaction to proton translocation (for every two electrons transferred, four hydrogen ions are translocated across the cytoplasmic membrane), and thus conserves the redox energy in a proton gradient. This Mycobacterium marinum (strain ATCC BAA-535 / M) protein is NADH-quinone oxidoreductase subunit K.